The following is a 204-amino-acid chain: Ribonuclease HII (204 aa).

Positions 14–203 (VGLCGVDEAG…VRLLLDQTSL (190 aa)) constitute an RNase H type-2 domain. Asp20, Glu21, and Asp112 together coordinate a divalent metal cation.

It belongs to the RNase HII family. It depends on Mn(2+) as a cofactor. The cofactor is Mg(2+).

It localises to the cytoplasm. The catalysed reaction is Endonucleolytic cleavage to 5'-phosphomonoester.. In terms of biological role, endonuclease that specifically degrades the RNA of RNA-DNA hybrids. The chain is Ribonuclease HII from Thiobacillus denitrificans (strain ATCC 25259 / T1).